Consider the following 261-residue polypeptide: Mite allergen Eur m 3 (261 aa).

Positions Met-1–Ala-18 are cleaved as a signal peptide. A propeptide spanning residues Asn-19–Thr-29 is cleaved from the precursor. A Peptidase S1 domain is found at Ile-30–Ser-260. Cysteines 54 and 70 form a disulfide. Active-site charge relay system residues include His-69 and Asp-114. Disulfide bonds link Cys-181/Cys-198 and Cys-210/Cys-236. Residue Ser-214 is the Charge relay system of the active site.

Belongs to the peptidase S1 family.

It is found in the secreted. This Euroglyphus maynei (Mayne's house dust mite) protein is Mite allergen Eur m 3 (EURM3).